A 92-amino-acid chain; its full sequence is Bombyxin A-7 (92 aa).

The N-terminal stretch at 1 to 19 (MKLLLAIALMLTIVMWVST) is a signal peptide. Glutamine 20 carries the pyrrolidone carboxylic acid modification. Disulfide bonds link cysteine 29–cysteine 79, cysteine 41–cysteine 92, and cysteine 78–cysteine 83. Residues 50-70 (SDAQYASYGSAWLMPYSEGRG) constitute a propeptide, c peptide like.

Belongs to the insulin family. As to quaternary structure, heterodimer of a B chain and an A chain linked by two disulfide bonds.

It is found in the secreted. Brain peptide responsible for activation of prothoracic glands to produce ecdysone in insects. The protein is Bombyxin A-7 (BBXA7) of Bombyx mori (Silk moth).